Consider the following 193-residue polypeptide: Ion-translocating oxidoreductase complex subunit B (193 aa).

The hydrophobic stretch occupies residues 1–23; sequence MTFLFIVITLLALIFGAILGFAS. The 4Fe-4S domain occupies 29 to 87; sequence EADPVVEKIDAILPQSQCGQCGYPGCKPYAEAICNGDEITKCIPGGQTTIVKIAEILGV. Positions 46, 49, 54, 70, 110, 113, 116, 120, 140, 143, 146, and 150 each coordinate [4Fe-4S] cluster. 2 4Fe-4S ferredoxin-type domains span residues 101–130 and 131–160; these read KVAFIDENMCIGCTKCIQACPVDAIIGTNK and AMHTIIPDLCTGCELCVAPCPTDCILMIPV.

This sequence belongs to the 4Fe4S bacterial-type ferredoxin family. RnfB subfamily. The complex is composed of six subunits: RnfA, RnfB, RnfC, RnfD, RnfE and RnfG. The cofactor is [4Fe-4S] cluster.

It localises to the cell inner membrane. Functionally, part of a membrane-bound complex that couples electron transfer with translocation of ions across the membrane. In Haemophilus influenzae (strain 86-028NP), this protein is Ion-translocating oxidoreductase complex subunit B.